The sequence spans 408 residues: Lipoate--protein ligase 1 (408 aa).

A mitochondrion-targeting transit peptide spans 1–18 (MKRIFRLVRRCHYSTEKR). One can recognise a BPL/LPL catalytic domain in the interval 60 to 242 (KFNEPILFLW…EFTKFYEQNY (183 aa)). The ATP site is built by arginine 102, glycine 107, and tyrosine 110. Glycine 107 is a (R)-lipoate binding site. Mg(2+) is bound at residue aspartate 153. Lysine 160 is a binding site for ATP. Lysine 160 is a binding site for (R)-lipoate.

This sequence belongs to the LplA family.

Its subcellular location is the mitochondrion. The enzyme catalyses L-lysyl-[lipoyl-carrier protein] + (R)-lipoate + ATP = N(6)-[(R)-lipoyl]-L-lysyl-[lipoyl-carrier protein] + AMP + diphosphate + H(+). The catalysed reaction is (R)-dihydrolipoate + L-lysyl-[lipoyl-carrier protein] + ATP = N(6)-[(R)-dihydrolipoyl]-L-lysyl-[lipoyl-carrier protein] + AMP + diphosphate + H(+). It carries out the reaction (R)-dihydrolipoate + ATP + H(+) = N(6)-[(R)-dihydrolipoyl]-5'-AMP + diphosphate. It catalyses the reaction N(6)-[(R)-dihydrolipoyl]-5'-AMP + L-lysyl-[lipoyl-carrier protein] = N(6)-[(R)-dihydrolipoyl]-L-lysyl-[lipoyl-carrier protein] + AMP + 2 H(+). The protein operates within protein modification; protein lipoylation via exogenous pathway; protein N(6)-(lipoyl)lysine from lipoate: step 1/2. It participates in protein modification; protein lipoylation via exogenous pathway; protein N(6)-(lipoyl)lysine from lipoate: step 2/2. Inhibited by the lipoate analog 8-bromo-octanoate (BrO). Catalytic activity is increased in the presence of Mg(2+). Its function is as follows. Catalyzes both the ATP-dependent activation of exogenously supplied lipoate to lipoyl-AMP and the transfer of the activated lipoyl onto the lipoyl domains of lipoate-dependent enzymes. In the mitochondrion, functions as a redox switch between two lipoylation routes. Senses the oxidation state of lipoate and determines which downstream enzymes will be lipoylated. In low reducing conditions, uses lipoate in its oxidized ring form to lipoylate glycine cleavage system H-protein GCVH. In high reducing conditions and together with LipL2, uses reduced lipoate (dihydrolipoate) to lipoylate the E2 component of the branched chain alpha-ketoacid dehydrogenase complex BCKDH-E2/BCDH and the E2 component of the alpha-ketoglutarate dehydrogenase complex KDH. LipL1 is responsible for catalysing the activation of lipoate, forming lipoyl-AMP while LipL2 is required but is not capable of catalyzing this reaction. This chain is Lipoate--protein ligase 1, found in Plasmodium falciparum (isolate 3D7).